The following is a 94-amino-acid chain: Co-chaperonin GroES (94 aa).

It belongs to the GroES chaperonin family. As to quaternary structure, heptamer of 7 subunits arranged in a ring. Interacts with the chaperonin GroEL.

It localises to the cytoplasm. Its function is as follows. Together with the chaperonin GroEL, plays an essential role in assisting protein folding. The GroEL-GroES system forms a nano-cage that allows encapsulation of the non-native substrate proteins and provides a physical environment optimized to promote and accelerate protein folding. GroES binds to the apical surface of the GroEL ring, thereby capping the opening of the GroEL channel. This chain is Co-chaperonin GroES, found in Listeria monocytogenes serotype 4b (strain CLIP80459).